The primary structure comprises 498 residues: ATP synthase subunit alpha, chloroplastic (498 aa).

170-177 lines the ATP pocket; sequence GDRQTGKT.

The protein belongs to the ATPase alpha/beta chains family. In terms of assembly, F-type ATPases have 2 components, CF(1) - the catalytic core - and CF(0) - the membrane proton channel. CF(1) has five subunits: alpha(3), beta(3), gamma(1), delta(1), epsilon(1). CF(0) has four main subunits: a, b, b' and c.

Its subcellular location is the plastid. The protein localises to the chloroplast thylakoid membrane. It catalyses the reaction ATP + H2O + 4 H(+)(in) = ADP + phosphate + 5 H(+)(out). In terms of biological role, produces ATP from ADP in the presence of a proton gradient across the membrane. The alpha chain is a regulatory subunit. This chain is ATP synthase subunit alpha, chloroplastic, found in Oltmannsiellopsis viridis (Marine flagellate).